We begin with the raw amino-acid sequence, 364 residues long: tRNA 2-selenouridine synthase (364 aa).

One can recognise a Rhodanese domain in the interval 14-137; the sequence is LIADTPIIDV…LRQTAIQATI (124 aa). C97 (S-selanylcysteine intermediate) is an active-site residue.

The protein belongs to the SelU family. Monomer.

The enzyme catalyses 5-methylaminomethyl-2-thiouridine(34) in tRNA + selenophosphate + (2E)-geranyl diphosphate + H2O + H(+) = 5-methylaminomethyl-2-selenouridine(34) in tRNA + (2E)-thiogeraniol + phosphate + diphosphate. The catalysed reaction is 5-methylaminomethyl-2-thiouridine(34) in tRNA + (2E)-geranyl diphosphate = 5-methylaminomethyl-S-(2E)-geranyl-thiouridine(34) in tRNA + diphosphate. It catalyses the reaction 5-methylaminomethyl-S-(2E)-geranyl-thiouridine(34) in tRNA + selenophosphate + H(+) = 5-methylaminomethyl-2-(Se-phospho)selenouridine(34) in tRNA + (2E)-thiogeraniol. It carries out the reaction 5-methylaminomethyl-2-(Se-phospho)selenouridine(34) in tRNA + H2O = 5-methylaminomethyl-2-selenouridine(34) in tRNA + phosphate. Involved in the post-transcriptional modification of the uridine at the wobble position (U34) of tRNA(Lys), tRNA(Glu) and tRNA(Gln). Catalyzes the conversion of 2-thiouridine (S2U-RNA) to 2-selenouridine (Se2U-RNA). Acts in a two-step process involving geranylation of 2-thiouridine (S2U) to S-geranyl-2-thiouridine (geS2U) and subsequent selenation of the latter derivative to 2-selenouridine (Se2U) in the tRNA chain. The polypeptide is tRNA 2-selenouridine synthase (Escherichia coli O45:K1 (strain S88 / ExPEC)).